A 233-amino-acid polypeptide reads, in one-letter code: Ycf53-like protein (233 aa).

This sequence belongs to the ycf53 family.

The polypeptide is Ycf53-like protein (Synechocystis sp. (strain ATCC 27184 / PCC 6803 / Kazusa)).